We begin with the raw amino-acid sequence, 624 residues long: Low affinity potassium transport system protein Kup (624 aa).

The next 12 membrane-spanning stretches (helical) occupy residues 9–29 (LPAI…TSPL), 49–69 (VFGF…IKYL), 103–123 (VIMG…TPAI), 137–157 (PQLD…LFMI), 165–185 (VGKL…GLGL), 213–233 (VSFI…ALYA), 247–267 (WFTV…ALLL), 276–296 (PFFL…AALA), 337–357 (IYIP…IVIV), 365–385 (LAAA…ILST), 398–418 (FVAL…TANL), and 421–441 (LLSG…VMTT).

It belongs to the HAK/KUP transporter (TC 2.A.72) family.

It is found in the cell inner membrane. It catalyses the reaction K(+)(in) + H(+)(in) = K(+)(out) + H(+)(out). Functionally, responsible for the low-affinity transport of potassium into the cell. Likely operates as a K(+):H(+) symporter. The chain is Low affinity potassium transport system protein Kup from Shigella dysenteriae serotype 1 (strain Sd197).